The chain runs to 354 residues: Uroporphyrinogen decarboxylase (354 aa).

Substrate contacts are provided by residues 27 to 31 (RQAGR), aspartate 77, tyrosine 154, threonine 209, and histidine 327.

The protein belongs to the uroporphyrinogen decarboxylase family. Homodimer.

It localises to the cytoplasm. It catalyses the reaction uroporphyrinogen III + 4 H(+) = coproporphyrinogen III + 4 CO2. The protein operates within porphyrin-containing compound metabolism; protoporphyrin-IX biosynthesis; coproporphyrinogen-III from 5-aminolevulinate: step 4/4. Its function is as follows. Catalyzes the decarboxylation of four acetate groups of uroporphyrinogen-III to yield coproporphyrinogen-III. This is Uroporphyrinogen decarboxylase from Pseudomonas entomophila (strain L48).